A 303-amino-acid chain; its full sequence is Protoporphyrin uptake protein 1 (303 aa).

Topologically, residues methionine 1–alanine 18 are extracellular. Residues alanine 19–leucine 39 traverse the membrane as a helical segment. Over tyrosine 40 to proline 76 the chain is Cytoplasmic. A helical transmembrane segment spans residues threonine 77–glycine 97. Over arginine 98–tyrosine 111 the chain is Extracellular. A helical membrane pass occupies residues isoleucine 112 to isoleucine 132. The Cytoplasmic portion of the chain corresponds to phenylalanine 133–threonine 154. The chain crosses the membrane as a helical span at residues threonine 155–methionine 175. The Extracellular segment spans residues serine 176–threonine 183. A helical transmembrane segment spans residues glycine 184 to isoleucine 204. At asparagine 205–lysine 226 the chain is on the cytoplasmic side. Residues tryptophan 227–valine 247 form a helical membrane-spanning segment. Residues arginine 248 to glutamate 264 lie on the Extracellular side of the membrane. Residues tyrosine 265–glycine 285 form a helical membrane-spanning segment. At serine 286–asparagine 303 the chain is on the cytoplasmic side.

This sequence belongs to the lipid-translocating exporter (LTE) (TC 9.A.26.1) family. In terms of processing, N-glycosylated.

It is found in the cell membrane. In terms of biological role, involved in inducible protoporphyrin IX influx and heme efflux. This chain is Protoporphyrin uptake protein 1 (PUG1), found in Saccharomyces cerevisiae (strain ATCC 204508 / S288c) (Baker's yeast).